The primary structure comprises 535 residues: T-complex protein 1 subunit epsilon (535 aa).

This sequence belongs to the TCP-1 chaperonin family. In terms of assembly, heterooligomeric complex of about 850 to 900 kDa that forms two stacked rings, 12 to 16 nm in diameter.

Its subcellular location is the cytoplasm. Its function is as follows. Molecular chaperone; assists the folding of proteins upon ATP hydrolysis. Known to play a role, in vitro, in the folding of actin and tubulin. The sequence is that of T-complex protein 1 subunit epsilon from Avena sativa (Oat).